The primary structure comprises 339 residues: MKKKLFVLTMSTLFATQLINSNHANASTESVDKNFVVPESGINKIIPTYDEFKKAPKVNVGSLADNKNFVASEDKLSKIADPSAASKIVDKNFVVPESKLGNIVPEYKEINNRVNVATNNPASQQVDKHFVAKGPEVNRFITQNKVNHPFITTQTHYKKVITSYKSTHVHKHVNHATGSINKHFIVKPSEAPRYTQPSQSLMINHYFAVPGYHAHKFVTPGHASIKINHFCVVPQINSFKVIPPYGHNSHRMHVPSFQNNTTATHQNAKVKKAYDYKYFYSYKVVKGVKKYFSFSQSNGYKIGEPSLNIKNVNYQYAVPSYSPTHYVPEFKGSIPAPRV.

An N-terminal signal peptide occupies residues 1–26; sequence MKKKLFVLTMSTLFATQLINSNHANA.

The protein resides in the cell surface. Functionally, adhesin that binds to the host cell extracellular matrix proteins fibronectin, fibrinogen, collagen, and vitronectin. This Staphylococcus aureus (strain bovine RF122 / ET3-1) protein is Extracellular matrix protein-binding protein emp (emp).